Consider the following 127-residue polypeptide: RutC family protein PYRAB12510 (127 aa).

It belongs to the RutC family.

The polypeptide is RutC family protein PYRAB12510 (Pyrococcus abyssi (strain GE5 / Orsay)).